The sequence spans 251 residues: Triosephosphate isomerase (251 aa).

Residues asparagine 12 and lysine 14 each coordinate substrate. The Electrophile role is filled by histidine 96. Residue glutamate 168 is the Proton acceptor of the active site.

This sequence belongs to the triosephosphate isomerase family. As to quaternary structure, homodimer.

It localises to the cytoplasm. The protein resides in the glycosome. It carries out the reaction D-glyceraldehyde 3-phosphate = dihydroxyacetone phosphate. It functions in the pathway carbohydrate biosynthesis; gluconeogenesis. Its pathway is carbohydrate degradation; glycolysis; D-glyceraldehyde 3-phosphate from glycerone phosphate: step 1/1. This chain is Triosephosphate isomerase, found in Leishmania mexicana.